The chain runs to 456 residues: UDP-N-acetylmuramoylalanine--D-glutamate ligase (456 aa).

122–128 lines the ATP pocket; that stretch reads GSNGKST.

Belongs to the MurCDEF family.

Its subcellular location is the cytoplasm. It carries out the reaction UDP-N-acetyl-alpha-D-muramoyl-L-alanine + D-glutamate + ATP = UDP-N-acetyl-alpha-D-muramoyl-L-alanyl-D-glutamate + ADP + phosphate + H(+). It functions in the pathway cell wall biogenesis; peptidoglycan biosynthesis. Functionally, cell wall formation. Catalyzes the addition of glutamate to the nucleotide precursor UDP-N-acetylmuramoyl-L-alanine (UMA). This Saccharophagus degradans (strain 2-40 / ATCC 43961 / DSM 17024) protein is UDP-N-acetylmuramoylalanine--D-glutamate ligase.